The primary structure comprises 372 residues: Cell division protein FtsZ 1 (372 aa).

Residues 51–55 (GAGCN), 138–140 (GTG), glutamate 169, arginine 173, and aspartate 216 each bind GTP. The span at 350–360 (PEEETPLETPE) shows a compositional bias: acidic residues. The segment at 350–372 (PEEETPLETPEESPSIEISIPEL) is disordered. Residues 361–372 (ESPSIEISIPEL) are compositionally biased toward low complexity.

The protein belongs to the FtsZ family. In terms of assembly, homodimer. Polymerizes to form a dynamic ring structure in a strictly GTP-dependent manner. Interacts directly with several other division proteins.

The protein localises to the cytoplasm. Essential cell division protein that forms a contractile ring structure (Z ring) at the future cell division site. The regulation of the ring assembly controls the timing and the location of cell division. One of the functions of the FtsZ ring is to recruit other cell division proteins to the septum to produce a new cell wall between the dividing cells. Binds GTP and shows GTPase activity. This is Cell division protein FtsZ 1 from Pyrococcus furiosus (strain ATCC 43587 / DSM 3638 / JCM 8422 / Vc1).